We begin with the raw amino-acid sequence, 587 residues long: Probable terpene synthase 12 (587 aa).

Mg(2+)-binding residues include Asp338, Asp342, and Glu489. Positions 338-342 (DDVYD) match the DDXXD motif motif.

This sequence belongs to the terpene synthase family. Mg(2+) serves as cofactor.

Probable sesquiterpene synthase. The sequence is that of Probable terpene synthase 12 (TPS12) from Ricinus communis (Castor bean).